The sequence spans 342 residues: Dihydroorotate dehydrogenase (quinone) (342 aa).

Residues 60–64 (AGLDK) and threonine 84 each bind FMN. Substrate is bound at residue lysine 64. 109 to 113 (NRMGF) is a binding site for substrate. Asparagine 137 and asparagine 170 together coordinate FMN. Substrate is bound at residue asparagine 170. The active-site Nucleophile is the serine 173. Position 175 (asparagine 175) interacts with substrate. Positions 215 and 243 each coordinate FMN. 244–245 (NT) contacts substrate. Residues glycine 266, glycine 295, and 316–317 (YS) each bind FMN.

Belongs to the dihydroorotate dehydrogenase family. Type 2 subfamily. As to quaternary structure, monomer. It depends on FMN as a cofactor.

Its subcellular location is the cell membrane. It catalyses the reaction (S)-dihydroorotate + a quinone = orotate + a quinol. It functions in the pathway pyrimidine metabolism; UMP biosynthesis via de novo pathway; orotate from (S)-dihydroorotate (quinone route): step 1/1. In terms of biological role, catalyzes the conversion of dihydroorotate to orotate with quinone as electron acceptor. This Nitrosomonas europaea (strain ATCC 19718 / CIP 103999 / KCTC 2705 / NBRC 14298) protein is Dihydroorotate dehydrogenase (quinone).